The primary structure comprises 169 residues: Disulfide bond formation protein B 1 (169 aa).

The Cytoplasmic segment spans residues 1-13; that stretch reads MSALLKPLDNRLF. The chain crosses the membrane as a helical span at residues 14-30; sequence WPAVAIGGLLILAFVLY. The Periplasmic portion of the chain corresponds to 31 to 48; the sequence is LQHVRGFAPCSLCIFIRL. Cysteines 40 and 43 form a disulfide. A helical membrane pass occupies residues 49 to 64; that stretch reads DVLGLVLAGIVGSLAP. Over 65 to 71 the chain is Cytoplasmic; the sequence is RSRIAGG. The chain crosses the membrane as a helical span at residues 72 to 89; the sequence is IAALGMLAASLGGIYHAW. Residues 90 to 145 lie on the Periplasmic side of the membrane; sequence SLVAEEKLAAQGMGSCKMFMGFPEWIPLDTWLPQVFQPEGLCGEVVWTLLGQSMAV. A disulfide bond links Cys105 and Cys131. The helical transmembrane segment at 146 to 164 threads the bilayer; it reads WSLALFVFCLLVLAAKLAF. The Cytoplasmic portion of the chain corresponds to 165–169; the sequence is GRRTA.

Belongs to the DsbB family.

The protein localises to the cell inner membrane. In terms of biological role, required for disulfide bond formation in some periplasmic proteins. Acts by oxidizing the DsbA protein. In Pseudomonas aeruginosa (strain UCBPP-PA14), this protein is Disulfide bond formation protein B 1.